A 151-amino-acid polypeptide reads, in one-letter code: NADPH-dependent 7-cyano-7-deazaguanine reductase (151 aa).

The active-site Thioimide intermediate is the Cys-51. Asp-58 functions as the Proton donor in the catalytic mechanism. Substrate is bound by residues 73-75 and 92-93; these read VES and HE.

Belongs to the GTP cyclohydrolase I family. QueF type 1 subfamily.

The protein resides in the cytoplasm. The enzyme catalyses 7-aminomethyl-7-carbaguanine + 2 NADP(+) = 7-cyano-7-deazaguanine + 2 NADPH + 3 H(+). Its pathway is tRNA modification; tRNA-queuosine biosynthesis. Functionally, catalyzes the NADPH-dependent reduction of 7-cyano-7-deazaguanine (preQ0) to 7-aminomethyl-7-deazaguanine (preQ1). The chain is NADPH-dependent 7-cyano-7-deazaguanine reductase from Bacteroides fragilis (strain YCH46).